The sequence spans 313 residues: Ribosomal protein L11 methyltransferase (313 aa).

S-adenosyl-L-methionine contacts are provided by T164, G185, D207, and N249.

It belongs to the methyltransferase superfamily. PrmA family.

Its subcellular location is the cytoplasm. The enzyme catalyses L-lysyl-[protein] + 3 S-adenosyl-L-methionine = N(6),N(6),N(6)-trimethyl-L-lysyl-[protein] + 3 S-adenosyl-L-homocysteine + 3 H(+). Functionally, methylates ribosomal protein L11. This chain is Ribosomal protein L11 methyltransferase, found in Clostridium perfringens (strain 13 / Type A).